The sequence spans 549 residues: Glucose-6-phosphate isomerase (549 aa).

E355 functions as the Proton donor in the catalytic mechanism. Catalysis depends on residues H387 and K515.

This sequence belongs to the GPI family.

Its subcellular location is the cytoplasm. It catalyses the reaction alpha-D-glucose 6-phosphate = beta-D-fructose 6-phosphate. It functions in the pathway carbohydrate biosynthesis; gluconeogenesis. It participates in carbohydrate degradation; glycolysis; D-glyceraldehyde 3-phosphate and glycerone phosphate from D-glucose: step 2/4. Functionally, catalyzes the reversible isomerization of glucose-6-phosphate to fructose-6-phosphate. The sequence is that of Glucose-6-phosphate isomerase from Haemophilus influenzae (strain ATCC 51907 / DSM 11121 / KW20 / Rd).